The chain runs to 320 residues: GTP 3',8-cyclase (320 aa).

Residues 5-222 (KLSRPLKVLR…LMKKEFTFYP (218 aa)) form the Radical SAM core domain. Position 14 (arginine 14) interacts with GTP. Cysteine 21, cysteine 25, and cysteine 28 together coordinate [4Fe-4S] cluster. A GTP-binding site is contributed by arginine 65. Residue glycine 69 participates in S-adenosyl-L-methionine binding. GTP is bound at residue threonine 96. Serine 120 contributes to the S-adenosyl-L-methionine binding site. Lysine 157 contacts GTP. Methionine 191 serves as a coordination point for S-adenosyl-L-methionine. [4Fe-4S] cluster contacts are provided by cysteine 253 and cysteine 256. 258-260 (RIR) lines the GTP pocket. Cysteine 270 is a binding site for [4Fe-4S] cluster.

The protein belongs to the radical SAM superfamily. MoaA family. Monomer and homodimer. [4Fe-4S] cluster serves as cofactor.

It catalyses the reaction GTP + AH2 + S-adenosyl-L-methionine = (8S)-3',8-cyclo-7,8-dihydroguanosine 5'-triphosphate + 5'-deoxyadenosine + L-methionine + A + H(+). Its pathway is cofactor biosynthesis; molybdopterin biosynthesis. Functionally, catalyzes the cyclization of GTP to (8S)-3',8-cyclo-7,8-dihydroguanosine 5'-triphosphate. The protein is GTP 3',8-cyclase of Aquifex aeolicus (strain VF5).